Here is a 308-residue protein sequence, read N- to C-terminus: 3'(2'),5'-bisphosphate nucleotidase 1 (308 aa).

Residue alanine 2 is modified to N-acetylalanine. Aspartate 51 (proton acceptor) is an active-site residue. Glutamate 74, aspartate 117, leucine 119, and aspartate 120 together coordinate Mg(2+). Threonine 122 serves as the catalytic Proton acceptor. Threonine 122 is subject to Phosphothreonine. Residues threonine 195, histidine 198, glycine 220, and lysine 224 each contribute to the AMP site. Serine 240 carries the post-translational modification Phosphoserine. An N6-succinyllysine modification is found at lysine 244. Aspartate 247 contributes to the Mg(2+) binding site.

Belongs to the inositol monophosphatase superfamily. The cofactor is Mg(2+). In terms of tissue distribution, highly expressed in kidney, liver, pancreas and heart. Detected at lower levels in brain, placenta, lung and skeletal muscle.

The enzyme catalyses adenosine 3',5'-bisphosphate + H2O = AMP + phosphate. The catalysed reaction is adenosine 2',5'-bisphosphate + H2O = AMP + phosphate. It carries out the reaction 3'-phosphoadenylyl sulfate + H2O = adenosine 5'-phosphosulfate + phosphate. It catalyses the reaction 1D-myo-inositol 1,4-bisphosphate + H2O = 1D-myo-inositol 4-phosphate + phosphate. The enzyme catalyses 1D-myo-inositol 1,3,4-trisphosphate + H2O = 1D-myo-inositol 3,4-bisphosphate + phosphate. Is very sensitive to inhibition by Li(+) (IC(50)=0.3 mM for hydrolysis of PAP; IC(50)=0.6 mM for hydrolysis of inositol-1,4-bis-phosphate). Is not affected by high Na(+) concentrations. Functionally, phosphatase that converts 3'(2')-phosphoadenosine 5'-phosphate (PAP) to AMP and inositol 1,4-bisphosphate (Ins(1,4)P2) to inositol 4-phosphate. Is also able to hydrolyze adenosine 3'-phosphate 5'-phosphosulfate (PAPS) to adenosine 5'-phosphosulfate (APS). Probably prevents the toxic accumulation of PAP, a compound which inhibits a variety of proteins, including PAPS-utilizing enzymes such as sulfotransferases, and RNA processing enzymes. Could also play a role in inositol recycling and phosphoinositide metabolism. Is not active on 3'-AMP, inositol-1-phosphate and inositol-1,4,5-triphosphate. The protein is 3'(2'),5'-bisphosphate nucleotidase 1 (BPNT1) of Homo sapiens (Human).